A 437-amino-acid chain; its full sequence is 3-phosphoshikimate 1-carboxyvinyltransferase (437 aa).

Residues K21, S22, and R26 each coordinate 3-phosphoshikimate. K21 contributes to the phosphoenolpyruvate binding site. Phosphoenolpyruvate contacts are provided by G101 and R129. S172, S173, Q174, S200, D314, and K341 together coordinate 3-phosphoshikimate. Q174 provides a ligand contact to phosphoenolpyruvate. Catalysis depends on D314, which acts as the Proton acceptor. Phosphoenolpyruvate-binding residues include R345, R388, and K414.

Belongs to the EPSP synthase family. In terms of assembly, monomer.

Its subcellular location is the cytoplasm. The catalysed reaction is 3-phosphoshikimate + phosphoenolpyruvate = 5-O-(1-carboxyvinyl)-3-phosphoshikimate + phosphate. It functions in the pathway metabolic intermediate biosynthesis; chorismate biosynthesis; chorismate from D-erythrose 4-phosphate and phosphoenolpyruvate: step 6/7. Functionally, catalyzes the transfer of the enolpyruvyl moiety of phosphoenolpyruvate (PEP) to the 5-hydroxyl of shikimate-3-phosphate (S3P) to produce enolpyruvyl shikimate-3-phosphate and inorganic phosphate. This is 3-phosphoshikimate 1-carboxyvinyltransferase from Clostridioides difficile (strain 630) (Peptoclostridium difficile).